The following is a 223-amino-acid chain: Twisted gastrulation protein homolog 1 (223 aa).

The signal sequence occupies residues 1–25; sequence MKLHYVAVLTLAILMFLTWLPESLS. Residues Asn-52 and Asn-81 are each glycosylated (N-linked (GlcNAc...) asparagine).

This sequence belongs to the twisted gastrulation protein family. Interacts with CHRD and BMP4. This interaction enhances CHRD/BMP4 complex formation. Interacts with BMP7.

The protein localises to the secreted. Its function is as follows. May be involved in dorsoventral axis formation. Seems to antagonize BMP signaling by forming ternary complexes with CHRD and BMPs, thereby preventing BMPs from binding to their receptors. In addition to the anti-BMP function, also has pro-BMP activity, partly mediated by cleavage and degradation of CHRD, which releases BMPs from ternary complexes. May be an important modulator of BMP-regulated cartilage development and chondrocyte differentiation. May play a role in thymocyte development. The chain is Twisted gastrulation protein homolog 1 (TWSG1) from Homo sapiens (Human).